Here is a 409-residue protein sequence, read N- to C-terminus: Peptidase T (409 aa).

Residue His80 coordinates Zn(2+). Asp82 is a catalytic residue. Asp143 serves as a coordination point for Zn(2+). The Proton acceptor role is filled by Glu177. Zn(2+)-binding residues include Glu178, Asp200, and His382.

Belongs to the peptidase M20B family. Zn(2+) is required as a cofactor.

It is found in the cytoplasm. The catalysed reaction is Release of the N-terminal residue from a tripeptide.. Cleaves the N-terminal amino acid of tripeptides. The sequence is that of Peptidase T from Enterococcus faecalis (strain ATCC 700802 / V583).